Consider the following 392-residue polypeptide: Formate-dependent phosphoribosylglycinamide formyltransferase (392 aa).

Residues 22–23 and Glu-82 contribute to the N(1)-(5-phospho-beta-D-ribosyl)glycinamide site; that span reads EL. ATP is bound by residues Arg-114, Lys-155, 160–165, 195–198, and Glu-203; these read SSGKGQ and EGLV. In terms of domain architecture, ATP-grasp spans 119–308; that stretch reads RLAAETLSLP…EFALHVRAFL (190 aa). Residues Glu-267 and Glu-279 each coordinate Mg(2+). N(1)-(5-phospho-beta-D-ribosyl)glycinamide is bound by residues Asp-286, Lys-355, and 362 to 363; that span reads RR.

Belongs to the PurK/PurT family. In terms of assembly, homodimer.

It catalyses the reaction N(1)-(5-phospho-beta-D-ribosyl)glycinamide + formate + ATP = N(2)-formyl-N(1)-(5-phospho-beta-D-ribosyl)glycinamide + ADP + phosphate + H(+). It functions in the pathway purine metabolism; IMP biosynthesis via de novo pathway; N(2)-formyl-N(1)-(5-phospho-D-ribosyl)glycinamide from N(1)-(5-phospho-D-ribosyl)glycinamide (formate route): step 1/1. Involved in the de novo purine biosynthesis. Catalyzes the transfer of formate to 5-phospho-ribosyl-glycinamide (GAR), producing 5-phospho-ribosyl-N-formylglycinamide (FGAR). Formate is provided by PurU via hydrolysis of 10-formyl-tetrahydrofolate. This Sodalis glossinidius (strain morsitans) protein is Formate-dependent phosphoribosylglycinamide formyltransferase.